Here is a 189-residue protein sequence, read N- to C-terminus: Interferon alpha-D (189 aa).

The N-terminal stretch at 1–23 (MAPAWSLLLALLLLSCNAICSLG) is a signal peptide. Intrachain disulfides connect cysteine 24–cysteine 122 and cysteine 52–cysteine 162.

It belongs to the alpha/beta interferon family.

It localises to the secreted. In terms of biological role, produced by macrophages, IFN-alpha have antiviral activities. Interferon stimulates the production of two enzymes: a protein kinase and an oligoadenylate synthetase. The polypeptide is Interferon alpha-D (IFNAD) (Bos taurus (Bovine)).